We begin with the raw amino-acid sequence, 329 residues long: MPLCNNFSGNLVVAVALFFAGALYIFNYQNYVNTLRTTQYPVDELEAALYTAAAGNNKTVIITMVNKAYVKEVGRGSTMLDLFLESFWEGEGTLPLLDHLMVVAVDQTAYDRCRFKRLHCYKMETEDGVDLEGEKVFMSKDFIEMMWRRTRLILDVLRRGYNVIFTDTDVMWLRSPLSRLNMSLDMQISVDRINVGGQLINTGFYHVRSNNKTISLFQKWYDMRLNSTGMKEQDVLKNLLDSGFFNQLGLNVGFLSTTEFSGFCQDSPHMGVVTTVHANCCLHIPAKVFDLTRVLRDWKRYKASHVNSKWSPHLKCSRSWNDTHYIPRL.

The N-terminal stretch at 1–22 (MPLCNNFSGNLVVAVALFFAGA) is a signal peptide.

This is an uncharacterized protein from Arabidopsis thaliana (Mouse-ear cress).